Here is a 289-residue protein sequence, read N- to C-terminus: Putative transmembrane protein ORF289 (289 aa).

Over 1–152 (MAIAKEFLLT…QYTSVVTFRT (152 aa)) the chain is Extracellular. The helical transmembrane segment at 153-173 (LVAPILYFFALFLVPAWSTVL) threads the bilayer. Over 174–234 (KQNPTFPQSQ…NGEVTSTQVN (61 aa)) the chain is Cytoplasmic. A helical membrane pass occupies residues 235–255 (APIFIGVTTPSGVLVLAYNYY). Topologically, residues 256–289 (SGTISKYVSLTVTTTYGSATVINQFETKTTGGTT) are extracellular.

It is found in the host membrane. The sequence is that of Putative transmembrane protein ORF289 from Acidianus sp. F28 (AFV-2).